We begin with the raw amino-acid sequence, 334 residues long: Protein-methionine-sulfoxide reductase catalytic subunit MsrP (334 aa).

A signal peptide (tat-type signal) is located at residues 1–44; the sequence is MKKNQFLKESDVTAESVFFMKRRQVLKALGISAAALSLPHAAHA. Residues Asn88, 91-92, Cys146, Thr181, Asn233, Arg238, and 249-251 contribute to the Mo-molybdopterin site; these read YE and GIK.

Belongs to the MsrP family. In terms of assembly, heterodimer of a catalytic subunit (MsrP) and a heme-binding subunit (MsrQ). Requires Mo-molybdopterin as cofactor. In terms of processing, predicted to be exported by the Tat system. The position of the signal peptide cleavage has not been experimentally proven.

Its subcellular location is the periplasm. It carries out the reaction L-methionyl-[protein] + a quinone + H2O = L-methionyl-(S)-S-oxide-[protein] + a quinol. The enzyme catalyses L-methionyl-[protein] + a quinone + H2O = L-methionyl-(R)-S-oxide-[protein] + a quinol. Part of the MsrPQ system that repairs oxidized periplasmic proteins containing methionine sulfoxide residues (Met-O), using respiratory chain electrons. Thus protects these proteins from oxidative-stress damage caused by reactive species of oxygen and chlorine generated by the host defense mechanisms. MsrPQ is essential for the maintenance of envelope integrity under bleach stress, rescuing a wide series of structurally unrelated periplasmic proteins from methionine oxidation, including the primary periplasmic chaperone SurA and the lipoprotein Pal. The catalytic subunit MsrP is non-stereospecific, being able to reduce both (R-) and (S-) diastereoisomers of methionine sulfoxide. This chain is Protein-methionine-sulfoxide reductase catalytic subunit MsrP, found in Shigella boydii serotype 18 (strain CDC 3083-94 / BS512).